The following is a 139-amino-acid chain: D-ribose pyranase (139 aa).

Catalysis depends on histidine 20, which acts as the Proton donor. Substrate contacts are provided by residues aspartate 28, histidine 106, and tyrosine 128–asparagine 130.

Belongs to the RbsD / FucU family. RbsD subfamily. In terms of assembly, homodecamer.

Its subcellular location is the cytoplasm. It catalyses the reaction beta-D-ribopyranose = beta-D-ribofuranose. It functions in the pathway carbohydrate metabolism; D-ribose degradation; D-ribose 5-phosphate from beta-D-ribopyranose: step 1/2. Functionally, catalyzes the interconversion of beta-pyran and beta-furan forms of D-ribose. The polypeptide is D-ribose pyranase (Salmonella arizonae (strain ATCC BAA-731 / CDC346-86 / RSK2980)).